A 278-amino-acid chain; its full sequence is Trehalose monomycolate transport factor A (278 aa).

Methionine 1 is a topological domain (periplasmic). A helical transmembrane segment spans residues 2 to 22; the sequence is VPLWFTLSALCFVGAAVLLYV. Residues 23 to 278 are Cytoplasmic-facing; it reads DIDRRRGLGR…NGREASHFQR (256 aa). Residues 200 to 278 are disordered; that stretch reads PPVPQNGSQA…NGREASHFQR (79 aa). Over residues 269 to 278 the composition is skewed to basic and acidic residues; sequence NGREASHFQR.

Monomer. Interacts (via N-terminus) with MmpL3; active trehalose monomycolate (TMM) biosynthesis is not required for the complex formation. Interacts with MSMEG_5308.

The protein localises to the cell inner membrane. It localises to the cell septum. Its subcellular location is the cell tip. In terms of biological role, required for MmpL3-dependent trehalose monomycolate (TMM) transport to the cell wall. Required for growth and cell elongation. The chain is Trehalose monomycolate transport factor A from Mycolicibacterium smegmatis (strain ATCC 700084 / mc(2)155) (Mycobacterium smegmatis).